A 146-amino-acid polypeptide reads, in one-letter code: Large ribosomal subunit protein uL15 (146 aa).

The span at 1-13 shows a compositional bias: basic and acidic residues; that stretch reads MKLHELYPAEGSR. The tract at residues 1–55 is disordered; the sequence is MKLHELYPAEGSRKVRNRVGRGAATGNGKTSGRGQKGQKARSGGKVRPGFEGGQL. The span at 23–35 shows a compositional bias: gly residues; sequence AATGNGKTSGRGQ.

Belongs to the universal ribosomal protein uL15 family. In terms of assembly, part of the 50S ribosomal subunit.

Functionally, binds to the 23S rRNA. This is Large ribosomal subunit protein uL15 from Staphylococcus carnosus (strain TM300).